The chain runs to 147 residues: Large ribosomal subunit protein bL9 (147 aa).

Belongs to the bacterial ribosomal protein bL9 family.

Its function is as follows. Binds to the 23S rRNA. The polypeptide is Large ribosomal subunit protein bL9 (Citrifermentans bemidjiense (strain ATCC BAA-1014 / DSM 16622 / JCM 12645 / Bem) (Geobacter bemidjiensis)).